The primary structure comprises 458 residues: Serine protease HTRA2, mitochondrial (458 aa).

A mitochondrion-targeting transit peptide spans 1–31 (MAALRAGRGAGWSLRGWRALWGGRWGKGPLL). Positions 32 to 133 (TPDLRALLTS…GGRGPPAVLA (102 aa)) are excised as a propeptide. A helical transmembrane segment spans residues 105 to 125 (VWLAVALGAGGAVLLLFWGGG). An IAP-binding motif motif is present at residues 134–137 (SVLG). The tract at residues 166 to 342 (ILGRHPFSGR…IPSDRLREFL (177 aa)) is serine protease. Active-site charge relay system residues include histidine 198, aspartate 228, and serine 306. The region spanning 364–445 (VMMLTLTPSI…QLAVRIRRGQ (82 aa)) is the PDZ domain.

Belongs to the peptidase S1C family. In terms of assembly, homotrimer. Interacts with MXI2. Interacts with THAP5 under apoptotic conditions. The mature protein, but not the precursor, binds to BIRC2/c-IAP1, BIRC3/c-IAP2 and XIAP/BIRC4. Interacts with BIRC6/bruce. Interacts with AREL1 (via HECT domain); in the cytoplasm following induction of apoptosis. In terms of processing, ubiquitinated by BIRC6; this activity is inhibited by DIABLO/SMAC. Autoproteolytically activated.

It localises to the mitochondrion intermembrane space. Its subcellular location is the mitochondrion membrane. It catalyses the reaction Cleavage of non-polar aliphatic amino-acids at the P1 position, with a preference for Val, Ile and Met. At the P2 and P3 positions, Arg is selected most strongly with a secondary preference for other hydrophilic residues.. With respect to regulation, inhibited by BIRC6. In terms of biological role, serine protease that shows proteolytic activity against a non-specific substrate beta-casein. Promotes apoptosis by either relieving the inhibition of BIRC proteins on caspases, leading to an increase in caspase activity; or by a BIRC inhibition-independent, caspase-independent and serine protease activity-dependent mechanism. Cleaves BIRC6 and relieves its inhibition on CASP3, CASP7 and CASP9, but it is also prone to inhibition by BIRC6. Cleaves THAP5 and promotes its degradation during apoptosis. The chain is Serine protease HTRA2, mitochondrial (HTRA2) from Bos taurus (Bovine).